The sequence spans 457 residues: NADP-specific glutamate dehydrogenase (457 aa).

K111 is an active-site residue.

This sequence belongs to the Glu/Leu/Phe/Val dehydrogenases family. As to quaternary structure, homohexamer.

The enzyme catalyses L-glutamate + NADP(+) + H2O = 2-oxoglutarate + NH4(+) + NADPH + H(+). This chain is NADP-specific glutamate dehydrogenase (gdhA), found in Agaricus bisporus (White button mushroom).